A 1249-amino-acid chain; its full sequence is Clustered mitochondria protein homolog (1249 aa).

Residues 1-32 (MAQTNGELEHSKETPEQLTNGNHPEETQEEDN) are disordered. One can recognise a Clu domain in the interval 318-562 (DITRSQENYL…RVTPLDVMWQ (245 aa)). Basic and acidic residues predominate over residues 605–628 (KAEADAAKAESSEATESKEQASEE). Disordered stretches follow at residues 605-636 (KAEA…DQER) and 868-903 (KAPA…AAKE). 3 TPR repeats span residues 974–1007 (AKLY…TERT), 1016–1049 (ILSY…WKII), and 1058–1091 (ITTM…CESL). The segment at 1174-1249 (NMNPRSLGTK…KLRGSKKSSA (76 aa)) is disordered. The segment covering 1176–1190 (NPRSLGTKIQPQVGQ) has biased composition (polar residues).

This sequence belongs to the CLU family. As to quaternary structure, may associate with the eukaryotic translation initiation factor 3 (eIF-3) complex.

The protein resides in the cytoplasm. In terms of biological role, mRNA-binding protein involved in proper cytoplasmic distribution of mitochondria. This chain is Clustered mitochondria protein homolog, found in Aspergillus niger (strain ATCC MYA-4892 / CBS 513.88 / FGSC A1513).